Consider the following 497-residue polypeptide: Protein root UVB sensitive 6 (497 aa).

It belongs to the RUS1 family.

Its function is as follows. Required for normal embryo development. This chain is Protein root UVB sensitive 6, found in Arabidopsis thaliana (Mouse-ear cress).